Here is a 248-residue protein sequence, read N- to C-terminus: Tropomyosin alpha-4 chain (248 aa).

Ala2 bears the N-acetylalanine mark. Residues 2–248 (AGLNSLEAVK…DQTLNELNCI (247 aa)) are a coiled coil. Ser6 carries the post-translational modification Phosphoserine. The tract at residues 15 to 47 (QALQQQADEAEDRAQGLQRELDGERERREKAEG) is disordered. A compositionally biased stretch (basic and acidic residues) spans 33-47 (RELDGERERREKAEG). N6-acetyllysine occurs at positions 177 and 215. Thr216 bears the Phosphothreonine mark.

It belongs to the tropomyosin family. As to quaternary structure, homodimer. Heterodimer of an alpha (TPM1, TPM3 or TPM4) and a beta (TPM2) chain. Detected in cardiac tissue and platelets, the form found in cardiac tissue is a higher molecular weight than the form found in platelets. Expressed at higher levels in the platelets of hypertensive patients with cardiac hypertrophy than in the platelets of hypertensive patients without cardiac hypertrophy (at protein level).

The protein resides in the cytoplasm. The protein localises to the cytoskeleton. In terms of biological role, binds to actin filaments in muscle and non-muscle cells. Plays a central role, in association with the troponin complex, in the calcium dependent regulation of vertebrate striated muscle contraction. Smooth muscle contraction is regulated by interaction with caldesmon. In non-muscle cells is implicated in stabilizing cytoskeleton actin filaments. Binds calcium. Plays a role in platelet biogenesis. The polypeptide is Tropomyosin alpha-4 chain (TPM4) (Homo sapiens (Human)).